Consider the following 294-residue polypeptide: MSIFKGSGVAIVTPFCENGVNFKKLEELIEWHIENSTDAIVICGTTGEASTMTEAEIKETIKFTVDKVQGRIPVIAGTGSNNTRKAIELSKWAKSIGVDGLLLITPYYNKTTQKGIVEHFKAINDDVDVPIILYNVPGRTGLNILPKTLVKICDTCSNVVAIKEASGDLSQIIEMKALLKDRIDIYSGNDDQIIPILSIGGIGVISVLANIMPKEVHDMCELYLKGKTKKALEIQLNTLSLTNSLFIETNPIPVKTAMNIMGIDVGELRLPLCNMDESNLNLLKKELSNHALIK.

Threonine 46 is a binding site for pyruvate. Tyrosine 134 (proton donor/acceptor) is an active-site residue. The active-site Schiff-base intermediate with substrate is lysine 163. Position 205 (isoleucine 205) interacts with pyruvate.

It belongs to the DapA family. In terms of assembly, homotetramer; dimer of dimers.

The protein resides in the cytoplasm. It catalyses the reaction L-aspartate 4-semialdehyde + pyruvate = (2S,4S)-4-hydroxy-2,3,4,5-tetrahydrodipicolinate + H2O + H(+). It functions in the pathway amino-acid biosynthesis; L-lysine biosynthesis via DAP pathway; (S)-tetrahydrodipicolinate from L-aspartate: step 3/4. Functionally, catalyzes the condensation of (S)-aspartate-beta-semialdehyde [(S)-ASA] and pyruvate to 4-hydroxy-tetrahydrodipicolinate (HTPA). The polypeptide is 4-hydroxy-tetrahydrodipicolinate synthase (Clostridium tetani (strain Massachusetts / E88)).